A 158-amino-acid chain; its full sequence is 2-C-methyl-D-erythritol 2,4-cyclodiphosphate synthase (158 aa).

The a divalent metal cation site is built by Asp-9 and His-11. Residues 9–11 (DVH) and 35–36 (HS) contribute to the 4-CDP-2-C-methyl-D-erythritol 2-phosphate site. His-43 is a binding site for a divalent metal cation. Residues 57-59 (DIG), 62-66 (FPDTD), 101-107 (AQKPKMA), 133-136 (TTTE), Phe-140, and Arg-143 each bind 4-CDP-2-C-methyl-D-erythritol 2-phosphate.

It belongs to the IspF family. Homotrimer. A divalent metal cation serves as cofactor.

It catalyses the reaction 4-CDP-2-C-methyl-D-erythritol 2-phosphate = 2-C-methyl-D-erythritol 2,4-cyclic diphosphate + CMP. It participates in isoprenoid biosynthesis; isopentenyl diphosphate biosynthesis via DXP pathway; isopentenyl diphosphate from 1-deoxy-D-xylulose 5-phosphate: step 4/6. Its function is as follows. Involved in the biosynthesis of isopentenyl diphosphate (IPP) and dimethylallyl diphosphate (DMAPP), two major building blocks of isoprenoid compounds. Catalyzes the conversion of 4-diphosphocytidyl-2-C-methyl-D-erythritol 2-phosphate (CDP-ME2P) to 2-C-methyl-D-erythritol 2,4-cyclodiphosphate (ME-CPP) with a corresponding release of cytidine 5-monophosphate (CMP). The sequence is that of 2-C-methyl-D-erythritol 2,4-cyclodiphosphate synthase from Bacillus pumilus (strain SAFR-032).